The chain runs to 64 residues: Prokaryotic ubiquitin-like protein Pup (64 aa).

The span at 1-11 (MAQEQTKRTGG) shows a compositional bias: basic and acidic residues. A disordered region spans residues 1–37 (MAQEQTKRTGGGDEDDTPGADGAAGQERREKLAEDTD). Residues 21-58 (DGAAGQERREKLAEDTDDLLDEIDDVLEENAEDFVRAY) form an ARC ATPase binding region. A coiled-coil region spans residues 24-52 (AGQERREKLAEDTDDLLDEIDDVLEENAE). The residue at position 64 (Q64) is a Deamidated glutamine. Q64 participates in a covalent cross-link: Isoglutamyl lysine isopeptide (Gln-Lys) (interchain with K-? in acceptor proteins).

This sequence belongs to the prokaryotic ubiquitin-like protein family. Strongly interacts with the proteasome-associated ATPase ARC through a hydrophobic interface; the interacting region of Pup lies in its C-terminal half. There is one Pup binding site per ARC hexamer ring. In terms of processing, is modified by deamidation of its C-terminal glutamine to glutamate by the deamidase Dop, a prerequisite to the subsequent pupylation process.

The protein operates within protein degradation; proteasomal Pup-dependent pathway. Functionally, protein modifier that is covalently attached to lysine residues of substrate proteins, thereby targeting them for proteasomal degradation. The tagging system is termed pupylation. This chain is Prokaryotic ubiquitin-like protein Pup, found in Rhodococcus jostii (strain RHA1).